Here is a 161-residue protein sequence, read N- to C-terminus: DNA-directed RNA polymerase 19 kDa subunit (161 aa).

Residues 1–32 are compositionally biased toward acidic residues; that stretch reads MADTDDIIDYESDDLTEYEDDEEDGESLETSD. Positions 1–35 are disordered; the sequence is MADTDDIIDYESDDLTEYEDDEEDGESLETSDIDP.

The protein belongs to the poxviridae DNA-directed RNA polymerase 19 kDa subunit family. The DNA-dependent RNA polymerase used for intermediate and late genes expression consists of eight subunits Rpo30/OPG66, Rpo7/OPG90, Rpo22/OPG103, Rpo147/OPG105, Rpo18/OPG119, Rpo19/OPG131, Rpo132/OPG151 and Rpo35/OPG156. The same holoenzyme, with the addition of the transcription-specificity factor OPG109, is used for early gene expression.

It is found in the virion. The catalysed reaction is RNA(n) + a ribonucleoside 5'-triphosphate = RNA(n+1) + diphosphate. Functionally, part of the DNA-dependent RNA polymerase which catalyzes the transcription of viral DNA into RNA using the four ribonucleoside triphosphates as substrates. Responsible for the transcription of early, intermediate and late genes. DNA-dependent RNA polymerase associates with the early transcription factor (ETF), itself composed of OPG118 and OPG133, thereby allowing the early genes transcription. Late transcription, and probably also intermediate transcription, require newly synthesized RNA polymerase. The chain is DNA-directed RNA polymerase 19 kDa subunit (OPG131) from Monkeypox virus.